Reading from the N-terminus, the 714-residue chain is ATP-dependent DNA helicase DinG (714 aa).

Residues 17–294 (ALQDQIPDFI…TCMEQFRPKT (278 aa)) form the Helicase ATP-binding domain. 54–61 (APTGVGKT) is an ATP binding site. The [4Fe-4S] cluster site is built by Cys-120, Cys-194, Cys-199, and Cys-205. The DEAH box motif lies at 248–251 (DEGH). Residues 517-698 (HIAEMAAYFR…VFPIEQPAVP (182 aa)) enclose the Helicase C-terminal domain.

Belongs to the helicase family. DinG subfamily. Type 1 sub-subfamily. The cofactor is [4Fe-4S] cluster.

It catalyses the reaction Couples ATP hydrolysis with the unwinding of duplex DNA at the replication fork by translocating in the 5'-3' direction. This creates two antiparallel DNA single strands (ssDNA). The leading ssDNA polymer is the template for DNA polymerase III holoenzyme which synthesizes a continuous strand.. The enzyme catalyses ATP + H2O = ADP + phosphate + H(+). In terms of biological role, DNA-dependent ATPase and 5'-3' DNA helicase. Unwinds D-loops, R-loops, forked DNA and G-quadruplex DNA. This Salmonella paratyphi A (strain ATCC 9150 / SARB42) protein is ATP-dependent DNA helicase DinG.